The sequence spans 207 residues: MVATCLQVVGFVTSFVGWIGVIVTTSTNDWVVTCGYTIPTCRKLDELGSKGLWADCVMATGLYHCKPLVDILILPGYVQACRALMIAASVLGLPAILLLLTVLPCIRMGHEPGVAKYRRAQLAGVLLILLALCAIVATIWFPVCAHRETTIVSFGYSLYAGWIGAVLCLVGGCVILCCAGDAQAFGENRFYYSSGSSSPTHAKSAHV.

Methionine 1 is a topological domain (cytoplasmic). The chain crosses the membrane as a helical span at residues valine 2–isoleucine 22. Residues valine 23–arginine 82 are Extracellular-facing. Residues alanine 83–leucine 103 form a helical membrane-spanning segment. Residues proline 104–leucine 122 are Cytoplasmic-facing. A helical transmembrane segment spans residues alanine 123–valine 143. Residues cysteine 144–serine 157 are Extracellular-facing. The chain crosses the membrane as a helical span at residues leucine 158–cysteine 178. The Cytoplasmic segment spans residues alanine 179–valine 207. Phosphoserine is present on residues serine 193, serine 194, serine 197, and serine 198.

Belongs to the claudin family. In terms of assembly, interacts with tetraspanin-3/TSPAN3. Interacts with OCLN.

The protein localises to the cell junction. Its subcellular location is the tight junction. The protein resides in the cell membrane. Its function is as follows. Plays a major role in tight junction-specific obliteration of the intercellular space, through calcium-independent cell-adhesion activity. In Macaca fascicularis (Crab-eating macaque), this protein is Claudin-11 (CLDN11).